The primary structure comprises 108 residues: Nucleoid-associated protein CPS_3743 (108 aa).

The segment at 87-108 (NKDKMGALTGGMQLPPGMKMPF) is disordered.

This sequence belongs to the YbaB/EbfC family. As to quaternary structure, homodimer.

The protein localises to the cytoplasm. Its subcellular location is the nucleoid. Functionally, binds to DNA and alters its conformation. May be involved in regulation of gene expression, nucleoid organization and DNA protection. The sequence is that of Nucleoid-associated protein CPS_3743 from Colwellia psychrerythraea (strain 34H / ATCC BAA-681) (Vibrio psychroerythus).